The following is a 268-amino-acid chain: Fibroblast growth factor 8 (268 aa).

The N-terminal stretch at 1–22 (MGSPRSALSCLLLHLLVLCLQA) is a signal peptide. Pyrrolidone carboxylic acid is present on Q23. The tract at residues 29 to 87 (QKRGPGAGNPADTLGQGHEDRPFGQRSRAGKNFTNPAPNYPEEGSKEQRDSVLPKVTQR) is disordered. Residue N60 is glycosylated (N-linked (GlcNAc...) asparagine). Residues 71–80 (EGSKEQRDSV) show a composition bias toward basic and acidic residues. A glycan (N-linked (GlcNAc...) asparagine) is linked at N190.

This sequence belongs to the heparin-binding growth factors family. In terms of assembly, monomer. Homodimer. Interacts with FGFR1, FGFR2, FGFR3 and FGFR4. Affinity between fibroblast growth factors (FGFs) and their receptors is increased by heparan sulfate glycosaminoglycans that function as coreceptors. Post-translationally, the N-terminus is blocked. In terms of tissue distribution, absent in normal mammary glands and detected only in adult testis and ovary and in midgestational embryos.

It is found in the secreted. Plays an important role in the regulation of embryonic development, cell proliferation, cell differentiation and cell migration. Required for normal brain, eye, ear and limb development during embryogenesis. Required for normal development of the gonadotropin-releasing hormone (GnRH) neuronal system. Plays a role in neurite outgrowth in hippocampal cells. Cooperates with Wnt-1 in mouse mammary tumor virus-induced murine mammary tumorigenesis. The chain is Fibroblast growth factor 8 (Fgf8) from Mus musculus (Mouse).